A 249-amino-acid polypeptide reads, in one-letter code: Phosphoserine phosphatase (249 aa).

It belongs to the HAD-like hydrolase superfamily. As to quaternary structure, homodimer. It depends on Mg(2+) as a cofactor. Co(2+) is required as a cofactor.

The enzyme catalyses O-phospho-L-serine + H2O = L-serine + phosphate. It catalyses the reaction O-phospho-D-serine + H2O = D-serine + phosphate. It participates in amino-acid biosynthesis; L-serine biosynthesis; L-serine from 3-phospho-D-glycerate: step 3/3. Catalyzes the last step of the phosphorylated serine biosynthetic pathway, i.e. dephosphorylation of O-phospho-L-serine to form L-serine. Is also able to dephosphorylate O-phospho-D-serine with similar efficiency. Displays a poor activity on L-phosphothreonine, and cannot use L-phosphotyrosine, pyridoxal phosphate, glucose 6-phosphate, or fructose 6-phosphate as substrates. This chain is Phosphoserine phosphatase, found in Thermus thermophilus (strain ATCC BAA-163 / DSM 7039 / HB27).